We begin with the raw amino-acid sequence, 414 residues long: Gamma-glutamyl phosphate reductase (414 aa).

The protein belongs to the gamma-glutamyl phosphate reductase family.

The protein resides in the cytoplasm. It catalyses the reaction L-glutamate 5-semialdehyde + phosphate + NADP(+) = L-glutamyl 5-phosphate + NADPH + H(+). The protein operates within amino-acid biosynthesis; L-proline biosynthesis; L-glutamate 5-semialdehyde from L-glutamate: step 2/2. Functionally, catalyzes the NADPH-dependent reduction of L-glutamate 5-phosphate into L-glutamate 5-semialdehyde and phosphate. The product spontaneously undergoes cyclization to form 1-pyrroline-5-carboxylate. The polypeptide is Gamma-glutamyl phosphate reductase (Xanthomonas campestris pv. campestris (strain B100)).